The sequence spans 494 residues: SNF1-related protein kinase catalytic subunit alpha KIN12 (494 aa).

Residues 19 to 270 (YRIGKTLGHG…ITEIRQHPWF (252 aa)) enclose the Protein kinase domain. ATP is bound by residues 25–33 (LGHGSFAKV) and lysine 48. Aspartate 142 acts as the Proton acceptor in catalysis. Threonine 175 carries the phosphothreonine modification. Positions 289–386 (AKKIEEEIIQ…GLKSNVKDDK (98 aa)) are auto-inhibitory domain (AID). The region spanning 291 to 331 (KIEEEIIQNVVNIGFDRNHVVDSLANRIQNEATVAYHLILD) is the UBA domain. Residues 293–494 (EEEIIQNVVN…VAFLRELGVL (202 aa)) are regulatory domain (RD). The segment at 387-494 (TWTLGLQSQG…VAFLRELGVL (108 aa)) is PPI. Residues 445 to 493 (AIILPTVIKFEIQLYKVREGKYLLDILRIDGPQFIFFDLCVAFLRELGV) form the KA1 domain.

It belongs to the protein kinase superfamily. CAMK Ser/Thr protein kinase family. SNF1 subfamily. Subunit of a probable heterotrimeric complex consisting of an alpha catalytic subunit, and a beta (KINB) and a gamma (KING or SNF4) non-catalytic regulatory subunits. Autophosphorylated. Expressed at very low levels.

The enzyme catalyses L-seryl-[protein] + ATP = O-phospho-L-seryl-[protein] + ADP + H(+). It catalyses the reaction L-threonyl-[protein] + ATP = O-phospho-L-threonyl-[protein] + ADP + H(+). Activated by phosphorylation at Thr-175. Functionally, catalytic subunit of the probable trimeric SNF1-related protein kinase (SnRK) complex, a central regulator of cellular energy homeostasis, which, in response to seemingly unrelated darkness, sugar and stress conditions, activates energy-producing pathways and inhibits energy-consuming processes. May also be involved in the regulation of fatty acid synthesis by phosphorylation of acetyl-CoA carboxylase and in assimilation of nitrogen by phosphorylating nitrate reductase. The chain is SNF1-related protein kinase catalytic subunit alpha KIN12 from Arabidopsis thaliana (Mouse-ear cress).